We begin with the raw amino-acid sequence, 211 residues long: 3,4-dihydroxy-2-butanone 4-phosphate synthase (211 aa).

D-ribulose 5-phosphate is bound by residues 37-38, D42, 150-154, and E174; these read RE and RGGHT. Mg(2+) is bound at residue E38. Position 153 (H153) interacts with Mg(2+).

Belongs to the DHBP synthase family. In terms of assembly, homodimer. Requires Mg(2+) as cofactor. Mn(2+) is required as a cofactor.

The enzyme catalyses D-ribulose 5-phosphate = (2S)-2-hydroxy-3-oxobutyl phosphate + formate + H(+). It participates in cofactor biosynthesis; riboflavin biosynthesis; 2-hydroxy-3-oxobutyl phosphate from D-ribulose 5-phosphate: step 1/1. Functionally, catalyzes the conversion of D-ribulose 5-phosphate to formate and 3,4-dihydroxy-2-butanone 4-phosphate. The protein is 3,4-dihydroxy-2-butanone 4-phosphate synthase of Baumannia cicadellinicola subsp. Homalodisca coagulata.